Here is a 218-residue protein sequence, read N- to C-terminus: Capsid protein (218 aa).

Positions 1–25 (MSSSQKKAGGKAGKPTKRSQNYAAL) are disordered. Serine 2 is subject to N-acetylserine; by host.

It belongs to the alphamovirus/ilarvirus capsid protein family.

The protein localises to the virion. Functionally, capsid protein. Binds to the to the 3' end of the nonpolyadenylated viral RNA and is involved in viral RNA translation initiation. Probably binds RNA and plays a role in packaging. In Alfalfa mosaic virus (strain Strasbourg), this protein is Capsid protein.